The primary structure comprises 95 residues: DNA-directed RNA polymerase subunit Rpo11 (95 aa).

Belongs to the archaeal Rpo11/eukaryotic RPB11/RPC19 RNA polymerase subunit family. As to quaternary structure, part of the RNA polymerase complex.

The protein resides in the cytoplasm. The enzyme catalyses RNA(n) + a ribonucleoside 5'-triphosphate = RNA(n+1) + diphosphate. DNA-dependent RNA polymerase (RNAP) catalyzes the transcription of DNA into RNA using the four ribonucleoside triphosphates as substrates. This chain is DNA-directed RNA polymerase subunit Rpo11, found in Pyrococcus abyssi (strain GE5 / Orsay).